The primary structure comprises 172 residues: NAD(P)H-quinone oxidoreductase subunit I, chloroplastic (172 aa).

2 consecutive 4Fe-4S ferredoxin-type domains span residues 55 to 84 and 95 to 124; these read GRIH…VDWK and LNYS…MTEE. Cys-64, Cys-67, Cys-70, Cys-74, Cys-104, Cys-107, Cys-110, and Cys-114 together coordinate [4Fe-4S] cluster.

It belongs to the complex I 23 kDa subunit family. In terms of assembly, NDH is composed of at least 16 different subunits, 5 of which are encoded in the nucleus. [4Fe-4S] cluster serves as cofactor.

Its subcellular location is the plastid. It is found in the chloroplast thylakoid membrane. It carries out the reaction a plastoquinone + NADH + (n+1) H(+)(in) = a plastoquinol + NAD(+) + n H(+)(out). The enzyme catalyses a plastoquinone + NADPH + (n+1) H(+)(in) = a plastoquinol + NADP(+) + n H(+)(out). In terms of biological role, NDH shuttles electrons from NAD(P)H:plastoquinone, via FMN and iron-sulfur (Fe-S) centers, to quinones in the photosynthetic chain and possibly in a chloroplast respiratory chain. The immediate electron acceptor for the enzyme in this species is believed to be plastoquinone. Couples the redox reaction to proton translocation, and thus conserves the redox energy in a proton gradient. The sequence is that of NAD(P)H-quinone oxidoreductase subunit I, chloroplastic from Arabidopsis thaliana (Mouse-ear cress).